A 551-amino-acid chain; its full sequence is RCC1 and BTB domain-containing protein 2 (551 aa).

RCC1 repeat units follow at residues 64–115 (NDEI…VLAT), 117–169 (DGEV…VLTS), 171–222 (GEVF…AVVD), 223–274 (TGEV…VLTD), 276–326 (GQIY…AAKT), and 328–382 (GGHV…TVAE). The BTB domain maps to 394-457 (ADLKFLVDGK…LYTDNISLSP (64 aa)).

As to expression, expressed in testis and heart (at protein level).

Its subcellular location is the cytoplasmic vesicle. The protein localises to the secretory vesicle. It is found in the acrosome. In Mus musculus (Mouse), this protein is RCC1 and BTB domain-containing protein 2 (Rcbtb2).